The chain runs to 139 residues: Holo-[acyl-carrier-protein] synthase (139 aa).

Residues aspartate 8 and glutamate 57 each coordinate Mg(2+).

It belongs to the P-Pant transferase superfamily. AcpS family. Mg(2+) serves as cofactor.

The protein localises to the cytoplasm. It catalyses the reaction apo-[ACP] + CoA = holo-[ACP] + adenosine 3',5'-bisphosphate + H(+). Functionally, transfers the 4'-phosphopantetheine moiety from coenzyme A to a Ser of acyl-carrier-protein. The polypeptide is Holo-[acyl-carrier-protein] synthase (Sinorhizobium fredii (strain NBRC 101917 / NGR234)).